The chain runs to 178 residues: Putative metal-dependent hydrolase GK0616 (178 aa).

Residues His-68, His-161, and His-165 each coordinate Zn(2+).

Belongs to the metal hydrolase YfiT family. As to quaternary structure, homodimer. Zn(2+) is required as a cofactor.

It is found in the cytoplasm. In terms of biological role, possible metal-dependent hydrolase. This chain is Putative metal-dependent hydrolase GK0616, found in Geobacillus kaustophilus (strain HTA426).